A 117-amino-acid chain; its full sequence is UPF0102 protein FTW_1281 (117 aa).

It belongs to the UPF0102 family.

In Francisella tularensis subsp. tularensis (strain WY96-3418), this protein is UPF0102 protein FTW_1281.